The following is an 858-amino-acid chain: Volume-regulated anion channel subunit LRRC8D (858 aa).

The Cytoplasmic portion of the chain corresponds to 1–22 (MFTLAEVASLNDIQPTYRILKP). Residues 23 to 48 (WWDVFMDYLAVVMLMVAIFAGTMQLT) form a helical membrane-spanning segment. Topologically, residues 49 to 163 (KDQVVCLPVL…YHLALPWYSK (115 aa)) are extracellular. Residues cysteine 54 and cysteine 354 are joined by a disulfide bond. Residues 164–182 (YFPYLALIHTIILMVSSNF) form a helical membrane-spanning segment. Residues 183-308 (WFKYPKTCSK…EDSDLIYKLY (126 aa)) are Cytoplasmic-facing. The tract at residues 221 to 251 (SEENKQRITGAQTLPKHVSTSSDEGSPSAST) is disordered. The segment covering 227-251 (RITGAQTLPKHVSTSSDEGSPSAST) has biased composition (polar residues). A phosphoserine mark is found at serine 241, serine 242, and serine 246. Residues 309-328 (VVQTVIKTAKFIFILCYTAN) form a helical membrane-spanning segment. The Extracellular portion of the chain corresponds to 329–360 (FVNAISFEHVCKPKVEHLIGYEVFECTHNMAY). Residues 361-386 (MLKKLLISYISIICVYGFICLYTLFW) traverse the membrane as a helical segment. The Cytoplasmic segment spans residues 387–858 (LFRIPLKEYS…DINIPFANGI (472 aa)). 13 LRR repeats span residues 514-534 (NLQE…AFSF), 538-559 (HLRC…VYLL), 561-582 (NLRE…IGLE), 589-609 (HLKI…ITDV), 612-632 (HLTK…NSLK), 636-657 (NVAE…IFSL), 659-680 (NLQE…ISFQ), 684-705 (RLTC…ITHV), 707-728 (NLES…VFSL), 730-751 (KLRC…IGLL), 753-774 (NLQH…LFKC), 776-797 (KLRT…VGQL), and 799-820 (QLTQ…LGQC).

It belongs to the LRRC8 family. As to quaternary structure, heterohexamer; oligomerizes with other LRRC8 proteins (LRRC8A, LRRC8B, LRRC8C and/or LRRC8E) to form a heterohexamer. In vivo, the subunit composition may depend primarily on expression levels, and heterooligomeric channels containing various proportions of the different LRRC8 proteins may coexist.

The protein localises to the cell membrane. Its subcellular location is the endoplasmic reticulum membrane. The enzyme catalyses chloride(in) = chloride(out). The catalysed reaction is iodide(out) = iodide(in). It carries out the reaction taurine(out) = taurine(in). In terms of biological role, non-essential component of the volume-regulated anion channel (VRAC, also named VSOAC channel), an anion channel required to maintain a constant cell volume in response to extracellular or intracellular osmotic changes. The VRAC channel conducts iodide better than chloride and can also conduct organic osmolytes like taurine. Plays a redundant role in the efflux of amino acids, such as aspartate, in response to osmotic stress. LRRC8A and LRRC8D are required for the uptake of the drug cisplatin. Channel activity requires LRRC8A plus at least one other family member (LRRC8B, LRRC8C, LRRC8D or LRRC8E); channel characteristics depend on the precise subunit composition. Also acts as a regulator of glucose-sensing in pancreatic beta cells: VRAC currents, generated in response to hypotonicity- or glucose-induced beta cell swelling, depolarize cells, thereby causing electrical excitation, leading to increase glucose sensitivity and insulin secretion. VRAC channels containing LRRC8D inhibit transport of immunoreactive cyclic dinucleotide GMP-AMP (2'-3'-cGAMP), an immune messenger produced in response to DNA virus in the cytosol. Mediates the import of the antibiotic blasticidin-S into the cell. The protein is Volume-regulated anion channel subunit LRRC8D of Homo sapiens (Human).